Here is a 482-residue protein sequence, read N- to C-terminus: Cobyric acid synthase (482 aa).

The 188-residue stretch at 243 to 430 folds into the GATase cobBQ-type domain; it reads ACKVVVPQLE…LHGLFTSDAF (188 aa). The Nucleophile role is filled by Cys-325. His-422 is an active-site residue.

The protein belongs to the CobB/CobQ family. CobQ subfamily.

The protein operates within cofactor biosynthesis; adenosylcobalamin biosynthesis. Its function is as follows. Catalyzes amidations at positions B, D, E, and G on adenosylcobyrinic A,C-diamide. NH(2) groups are provided by glutamine, and one molecule of ATP is hydrogenolyzed for each amidation. This Ruegeria sp. (strain TM1040) (Silicibacter sp.) protein is Cobyric acid synthase.